Consider the following 529-residue polypeptide: Bifunctional purine biosynthesis protein PurH (529 aa).

Residues 1–148 form the MGS-like domain; that stretch reads MQQRRPIRRA…KNHKDVAIVV (148 aa). K287 carries the N6-acetyllysine modification.

This sequence belongs to the PurH family.

It catalyses the reaction (6R)-10-formyltetrahydrofolate + 5-amino-1-(5-phospho-beta-D-ribosyl)imidazole-4-carboxamide = 5-formamido-1-(5-phospho-D-ribosyl)imidazole-4-carboxamide + (6S)-5,6,7,8-tetrahydrofolate. It carries out the reaction IMP + H2O = 5-formamido-1-(5-phospho-D-ribosyl)imidazole-4-carboxamide. The protein operates within purine metabolism; IMP biosynthesis via de novo pathway; 5-formamido-1-(5-phospho-D-ribosyl)imidazole-4-carboxamide from 5-amino-1-(5-phospho-D-ribosyl)imidazole-4-carboxamide (10-formyl THF route): step 1/1. It participates in purine metabolism; IMP biosynthesis via de novo pathway; IMP from 5-formamido-1-(5-phospho-D-ribosyl)imidazole-4-carboxamide: step 1/1. This is Bifunctional purine biosynthesis protein PurH from Escherichia coli O139:H28 (strain E24377A / ETEC).